The following is a 180-amino-acid chain: Cytidylate kinase 2 (180 aa).

Glycine 7–threonine 15 serves as a coordination point for ATP.

It belongs to the cytidylate kinase family. Type 2 subfamily.

The protein localises to the cytoplasm. It carries out the reaction CMP + ATP = CDP + ADP. The enzyme catalyses dCMP + ATP = dCDP + ADP. The protein is Cytidylate kinase 2 (cmk2) of Borreliella burgdorferi (strain ATCC 35210 / DSM 4680 / CIP 102532 / B31) (Borrelia burgdorferi).